Here is a 254-residue protein sequence, read N- to C-terminus: GTP cyclohydrolase 1 type 2 homolog (254 aa).

A divalent metal cation is bound by residues H68, H69, D106, H222, and E226.

Belongs to the GTP cyclohydrolase I type 2/NIF3 family. In terms of assembly, homohexamer.

In Allochromatium vinosum (strain ATCC 17899 / DSM 180 / NBRC 103801 / NCIMB 10441 / D) (Chromatium vinosum), this protein is GTP cyclohydrolase 1 type 2 homolog.